A 174-amino-acid polypeptide reads, in one-letter code: Shikimate kinase (174 aa).

Position 14-19 (14-19 (GAGKST)) interacts with ATP. Residue serine 18 coordinates Mg(2+). Aspartate 36, arginine 60, and glycine 82 together coordinate substrate. Arginine 120 is an ATP binding site. Arginine 141 is a binding site for substrate. Arginine 158 contacts ATP.

It belongs to the shikimate kinase family. In terms of assembly, monomer. Requires Mg(2+) as cofactor.

The protein resides in the cytoplasm. The enzyme catalyses shikimate + ATP = 3-phosphoshikimate + ADP + H(+). The protein operates within metabolic intermediate biosynthesis; chorismate biosynthesis; chorismate from D-erythrose 4-phosphate and phosphoenolpyruvate: step 5/7. Its function is as follows. Catalyzes the specific phosphorylation of the 3-hydroxyl group of shikimic acid using ATP as a cosubstrate. This is Shikimate kinase from Buchnera aphidicola subsp. Baizongia pistaciae (strain Bp).